Reading from the N-terminus, the 185-residue chain is Large ribosomal subunit protein uL5 (185 aa).

This sequence belongs to the universal ribosomal protein uL5 family. In terms of assembly, part of the 50S ribosomal subunit; part of the 5S rRNA/L5/L18/L25 subcomplex. Contacts the 5S rRNA and the P site tRNA. Forms a bridge to the 30S subunit in the 70S ribosome.

Its function is as follows. This is one of the proteins that bind and probably mediate the attachment of the 5S RNA into the large ribosomal subunit, where it forms part of the central protuberance. In the 70S ribosome it contacts protein S13 of the 30S subunit (bridge B1b), connecting the 2 subunits; this bridge is implicated in subunit movement. Contacts the P site tRNA; the 5S rRNA and some of its associated proteins might help stabilize positioning of ribosome-bound tRNAs. The protein is Large ribosomal subunit protein uL5 of Bradyrhizobium sp. (strain BTAi1 / ATCC BAA-1182).